A 456-amino-acid polypeptide reads, in one-letter code: Histidine--tRNA ligase (456 aa).

It belongs to the class-II aminoacyl-tRNA synthetase family. As to quaternary structure, homodimer.

The protein resides in the cytoplasm. The catalysed reaction is tRNA(His) + L-histidine + ATP = L-histidyl-tRNA(His) + AMP + diphosphate + H(+). This Christiangramia forsetii (strain DSM 17595 / CGMCC 1.15422 / KT0803) (Gramella forsetii) protein is Histidine--tRNA ligase.